A 257-amino-acid chain; its full sequence is Thiazole synthase (257 aa).

Catalysis depends on K98, which acts as the Schiff-base intermediate with DXP. 1-deoxy-D-xylulose 5-phosphate is bound by residues G159, 185-186 (AG), and 207-208 (NT).

This sequence belongs to the ThiG family. As to quaternary structure, homotetramer. Forms heterodimers with either ThiH or ThiS.

Its subcellular location is the cytoplasm. The catalysed reaction is [ThiS sulfur-carrier protein]-C-terminal-Gly-aminoethanethioate + 2-iminoacetate + 1-deoxy-D-xylulose 5-phosphate = [ThiS sulfur-carrier protein]-C-terminal Gly-Gly + 2-[(2R,5Z)-2-carboxy-4-methylthiazol-5(2H)-ylidene]ethyl phosphate + 2 H2O + H(+). It functions in the pathway cofactor biosynthesis; thiamine diphosphate biosynthesis. Its function is as follows. Catalyzes the rearrangement of 1-deoxy-D-xylulose 5-phosphate (DXP) to produce the thiazole phosphate moiety of thiamine. Sulfur is provided by the thiocarboxylate moiety of the carrier protein ThiS. In vitro, sulfur can be provided by H(2)S. This chain is Thiazole synthase, found in Anaeromyxobacter sp. (strain Fw109-5).